We begin with the raw amino-acid sequence, 947 residues long: Protein NLP8 (947 aa).

Disordered stretches follow at residues 114–135 (RSSAQEMNSQFHRSSDSDELSG), 509–533 (STKKEGTKPGFRSSDMSNFPQTTSS), and 550–591 (SMFS…EKNV). Over residues 126–135 (RSSDSDELSG) the composition is skewed to basic and acidic residues. Composition is skewed to polar residues over residues 522-533 (SDMSNFPQTTSS) and 550-572 (SMFSGMSSDKENSITVSQGTLEQ). A compositionally biased stretch (basic and acidic residues) spans 573–587 (DVSKARTPEKKKSTT). Positions 577–671 (ARTPEKKKST…LDSVQGVEGG (95 aa)) constitute an RWP-RK domain. The stretch at 646–666 (RKINKVNRSLRKIQTVLDSVQ) forms a coiled coil. Residues 805–815 (SCSISDSSNGS) show a composition bias toward low complexity. The segment at 805–828 (SCSISDSSNGSGAVLRGSSSTSME) is disordered. A PB1 domain is found at 847–929 (TLIVKASYRE…HSVKFLVRDL (83 aa)).

The protein localises to the nucleus. Functionally, probable transcription factor. The polypeptide is Protein NLP8 (NLP8) (Arabidopsis thaliana (Mouse-ear cress)).